The sequence spans 223 residues: Protein-L-isoaspartate O-methyltransferase (223 aa).

S70 is a catalytic residue.

This sequence belongs to the methyltransferase superfamily. L-isoaspartyl/D-aspartyl protein methyltransferase family.

The protein resides in the cytoplasm. It catalyses the reaction [protein]-L-isoaspartate + S-adenosyl-L-methionine = [protein]-L-isoaspartate alpha-methyl ester + S-adenosyl-L-homocysteine. Catalyzes the methyl esterification of L-isoaspartyl residues in peptides and proteins that result from spontaneous decomposition of normal L-aspartyl and L-asparaginyl residues. It plays a role in the repair and/or degradation of damaged proteins. The sequence is that of Protein-L-isoaspartate O-methyltransferase from Saccharophagus degradans (strain 2-40 / ATCC 43961 / DSM 17024).